The following is a 211-amino-acid chain: DNA dC-&gt;dU-editing enzyme APOBEC-3H (211 aa).

The region spanning 4–126 (LTAKTFSLQF…RRQQEGLRLL (123 aa)) is the CMP/dCMP-type deaminase domain. Position 54 (H54) interacts with Zn(2+). Residue E56 is the Proton donor of the active site. Residues C85 and C88 each coordinate Zn(2+).

This sequence belongs to the cytidine and deoxycytidylate deaminase family. As to quaternary structure, homodimer. Requires Zn(2+) as cofactor.

Its subcellular location is the cytoplasm. It catalyses the reaction a 2'-deoxycytidine in single-stranded DNA + H2O + H(+) = a 2'-deoxyuridine in single-stranded DNA + NH4(+). In terms of biological role, DNA deaminase (cytidine deaminase) which may act as an inhibitor of retrovirus replication and retrotransposon mobility via deaminase-dependent and -independent mechanisms. The protein is DNA dC-&gt;dU-editing enzyme APOBEC-3H of Pongo pygmaeus (Bornean orangutan).